The following is a 174-amino-acid chain: MTTIVSVRRNNQVVIAGDGQVSLGNTVMKGNARKVRRLYHNKVLAGFAGGTADAFTLFERFESKLEMHQGHLMRAAVEMAKDWRSDRVLRKLEALLAVADTECSLIITGNGDVVQPENDLIAIGSGGNFAQAAATALLENTDLSAKEIAEKSLTIAGDICVFTNQFKTIEELNY.

The active site involves threonine 2. 3 residues coordinate Na(+): glycine 157, cysteine 160, and threonine 163.

It belongs to the peptidase T1B family. HslV subfamily. A double ring-shaped homohexamer of HslV is capped on each side by a ring-shaped HslU homohexamer. The assembly of the HslU/HslV complex is dependent on binding of ATP.

The protein localises to the cytoplasm. The enzyme catalyses ATP-dependent cleavage of peptide bonds with broad specificity.. Its activity is regulated as follows. Allosterically activated by HslU binding. Its function is as follows. Protease subunit of a proteasome-like degradation complex believed to be a general protein degrading machinery. The polypeptide is ATP-dependent protease subunit HslV (Shewanella loihica (strain ATCC BAA-1088 / PV-4)).